The primary structure comprises 445 residues: KICSTOR subunit 2 (445 aa).

This sequence belongs to the KICS2 family. As to quaternary structure, part of the KICSTOR complex composed of KPTN, ITFG2, KICS2 and SZT2. SZT2 probably serves as a link between the other three proteins in the KICSTOR complex and may mediate the direct interaction with the GATOR complex via GATOR1. The KICSTOR complex interacts directly with the GATOR1 complex and most probably indirectly with the GATOR2 complex in an amino acid-independent manner.

It localises to the lysosome membrane. As part of the KICSTOR complex functions in the amino acid-sensing branch of the TORC1 signaling pathway. Recruits, in an amino acid-independent manner, the GATOR1 complex to the lysosomal membranes and allows its interaction with GATOR2 and the RAG GTPases. Functions upstream of the RAG GTPases and is required to negatively regulate mTORC1 signaling in absence of amino acids. In absence of the KICSTOR complex mTORC1 is constitutively localized to the lysosome and activated. The KICSTOR complex is also probably involved in the regulation of mTORC1 by glucose. This Homo sapiens (Human) protein is KICSTOR subunit 2.